Consider the following 297-residue polypeptide: Phosphoribosylaminoimidazole-succinocarboxamide synthase (297 aa).

Belongs to the SAICAR synthetase family.

It carries out the reaction 5-amino-1-(5-phospho-D-ribosyl)imidazole-4-carboxylate + L-aspartate + ATP = (2S)-2-[5-amino-1-(5-phospho-beta-D-ribosyl)imidazole-4-carboxamido]succinate + ADP + phosphate + 2 H(+). The protein operates within purine metabolism; IMP biosynthesis via de novo pathway; 5-amino-1-(5-phospho-D-ribosyl)imidazole-4-carboxamide from 5-amino-1-(5-phospho-D-ribosyl)imidazole-4-carboxylate: step 1/2. The sequence is that of Phosphoribosylaminoimidazole-succinocarboxamide synthase from Corynebacterium urealyticum (strain ATCC 43042 / DSM 7109).